We begin with the raw amino-acid sequence, 127 residues long: Aspartate 1-decarboxylase (127 aa).

Ser-25 functions as the Schiff-base intermediate with substrate; via pyruvic acid in the catalytic mechanism. Ser-25 is subject to Pyruvic acid (Ser). Residue Thr-57 coordinates substrate. The active-site Proton donor is Tyr-58. 73 to 75 (GAA) lines the substrate pocket.

Belongs to the PanD family. In terms of assembly, heterooctamer of four alpha and four beta subunits. Pyruvate serves as cofactor. In terms of processing, is synthesized initially as an inactive proenzyme, which is activated by self-cleavage at a specific serine bond to produce a beta-subunit with a hydroxyl group at its C-terminus and an alpha-subunit with a pyruvoyl group at its N-terminus.

Its subcellular location is the cytoplasm. The enzyme catalyses L-aspartate + H(+) = beta-alanine + CO2. Its pathway is cofactor biosynthesis; (R)-pantothenate biosynthesis; beta-alanine from L-aspartate: step 1/1. Its function is as follows. Catalyzes the pyruvoyl-dependent decarboxylation of aspartate to produce beta-alanine. This chain is Aspartate 1-decarboxylase, found in Exiguobacterium sibiricum (strain DSM 17290 / CCUG 55495 / CIP 109462 / JCM 13490 / 255-15).